Reading from the N-terminus, the 192-residue chain is Pyridoxal 5'-phosphate synthase subunit PdxT (192 aa).

47–49 (GES) is a binding site for L-glutamine. Cys-79 (nucleophile) is an active-site residue. L-glutamine contacts are provided by residues Arg-106 and 134 to 135 (IR). Active-site charge relay system residues include His-170 and Glu-172.

It belongs to the glutaminase PdxT/SNO family. As to quaternary structure, in the presence of PdxS, forms a dodecamer of heterodimers. Only shows activity in the heterodimer.

It catalyses the reaction aldehydo-D-ribose 5-phosphate + D-glyceraldehyde 3-phosphate + L-glutamine = pyridoxal 5'-phosphate + L-glutamate + phosphate + 3 H2O + H(+). The catalysed reaction is L-glutamine + H2O = L-glutamate + NH4(+). It functions in the pathway cofactor biosynthesis; pyridoxal 5'-phosphate biosynthesis. Functionally, catalyzes the hydrolysis of glutamine to glutamate and ammonia as part of the biosynthesis of pyridoxal 5'-phosphate. The resulting ammonia molecule is channeled to the active site of PdxS. The sequence is that of Pyridoxal 5'-phosphate synthase subunit PdxT from Anoxybacillus flavithermus (strain DSM 21510 / WK1).